Consider the following 287-residue polypeptide: Homoserine kinase (287 aa).

An ATP-binding site is contributed by 79–89; it reads PLARGLGSSSS.

This sequence belongs to the GHMP kinase family. Homoserine kinase subfamily.

It is found in the cytoplasm. It catalyses the reaction L-homoserine + ATP = O-phospho-L-homoserine + ADP + H(+). It functions in the pathway amino-acid biosynthesis; L-threonine biosynthesis; L-threonine from L-aspartate: step 4/5. Catalyzes the ATP-dependent phosphorylation of L-homoserine to L-homoserine phosphate. The chain is Homoserine kinase from Enterococcus faecalis (strain ATCC 700802 / V583).